The chain runs to 309 residues: Intron-encoded DNA endonuclease ai2a (309 aa).

The protein belongs to the LAGLIDADG endonuclease family.

The protein localises to the mitochondrion. In terms of biological role, mitochondrial DNA endonuclease involved in intron homing. Cleaves only one strand of intronless DNA sequence at the site which coincides with the I-SceII cleavage recognition site. The sequence is that of Intron-encoded DNA endonuclease ai2a (ai2a) from Dictyostelium discoideum (Social amoeba).